We begin with the raw amino-acid sequence, 562 residues long: Scaffold protein FimL (562 aa).

Interacts with PilG and FimV.

Its subcellular location is the cytoplasm. Functionally, regulates multiple virulence functions including type IV pilus (T4P)-mediated assembly and twitching motility as well as cAMP-dependent virulence gene expression. Regulates intracellular cyclic AMP (cAMP) levels through the activation of adenylate cyclase CyaB. Also functions as a scaffold linking FimV and PilG at the pole, where type IV pilus (T4P), the Chp chemosensory system and the CyaB adenylate cyclase interact. In Pseudomonas aeruginosa (strain ATCC 15692 / DSM 22644 / CIP 104116 / JCM 14847 / LMG 12228 / 1C / PRS 101 / PAO1), this protein is Scaffold protein FimL (fimL).